We begin with the raw amino-acid sequence, 883 residues long: Brevican core protein (883 aa).

Residues 1 to 22 form the signal peptide; it reads MIPLLLSLLAALVLTQAPAALA. One can recognise an Ig-like V-type domain in the interval 35–154; sequence FRVRIGAAQL…SSDAVEVKVK (120 aa). 5 disulfide bridges follow: cysteine 56–cysteine 136, cysteine 178–cysteine 249, cysteine 202–cysteine 223, cysteine 276–cysteine 351, and cysteine 300–cysteine 321. Asparagine 129 is a glycosylation site (N-linked (GlcNAc...) asparagine). 2 consecutive Link domains span residues 156–251 and 256–353; these read VVFL…YCYA and GELF…YCFR. An N-linked (GlcNAc...) asparagine glycan is attached at asparagine 336. The tract at residues 389–574 is disordered; sequence QEAVESESRG…EDGPSLLPET (186 aa). Serine 413 is modified (phosphoserine). Residue serine 413 is glycosylated (O-linked (Xyl...) (chondroitin sulfate) serine). Over residues 428 to 440 the composition is skewed to polar residues; sequence ESETQSVAPPTGS. A compositionally biased stretch (acidic residues) spans 441–451; sequence SEEEGEALEEE. A compositionally biased stretch (basic and acidic residues) spans 452–467; that stretch reads ERFKDTETPKEEKEQE. Serine 622 carries GPI-anchor amidated serine lipidation. In terms of domain architecture, EGF-like spans 622–658; it reads SSGDCIPSPCHNGGTCLEEKEGFRCLCVPGYGGDLCD. 7 disulfides stabilise this stretch: cysteine 626–cysteine 637, cysteine 631–cysteine 646, cysteine 648–cysteine 657, cysteine 692–cysteine 784, cysteine 760–cysteine 776, cysteine 791–cysteine 834, and cysteine 820–cysteine 847. Residues 658–786 enclose the C-type lectin domain; it reads DVGLHFCSPG…NYHLSYTCKM (129 aa). The 61-residue stretch at 789–849 folds into the Sushi domain; the sequence is VSCGPPPQLP…WEAPQISCVP (61 aa). The interval 859–883 is disordered; that stretch reads MTAPEGPRGQLPRQRKALLTPPSSL.

This sequence belongs to the aggrecan/versican proteoglycan family. In terms of assembly, interacts with TNR. O-glycosylated; contains chondroitin sulfate. Brain.

It localises to the secreted. Its subcellular location is the extracellular space. It is found in the extracellular matrix. The protein localises to the membrane. In terms of biological role, may play a role in the terminally differentiating and the adult nervous system during postnatal development. Could stabilize interactions between hyaluronan (HA) and brain proteoglycans. Isoform 2 may function as a chondroitin sulfate-bearing cell surface receptor. In Rattus norvegicus (Rat), this protein is Brevican core protein (Bcan).